Reading from the N-terminus, the 44-residue chain is Thymosin beta-4 (44 aa).

2 stretches are compositionally biased toward basic and acidic residues: residues M1–E25 and E33–S44. The tract at residues M1–S44 is disordered. The residue at position 2 (S2) is an N-acetylserine.

It belongs to the thymosin beta family. In terms of tissue distribution, spleen, kidney, heart, and oocytes.

It is found in the cytoplasm. The protein localises to the cytoskeleton. Functionally, plays an important role in the organization of the cytoskeleton. Binds to and sequesters actin monomers (G actin) and therefore inhibits actin polymerization. This chain is Thymosin beta-4 (tmsb4), found in Xenopus laevis (African clawed frog).